The following is a 299-amino-acid chain: Apolipoprotein E (299 aa).

The first 18 residues, 1-18, serve as a signal peptide directing secretion; that stretch reads MKALWAVLVVTLLAGCRA. A run of 8 repeats spans residues 74–95, 96–117, 118–139, 140–161, 162–183, 184–205, 206–223, and 224–245. The segment at 74–245 is 8 X 22 AA approximate tandem repeats; that stretch reads VLMEDTMKEV…RLDEVREQME (172 aa). The tract at residues 152 to 162 is LDL and other lipoprotein receptors binding; sequence HLRKLRKRLLR. 156 to 159 contributes to the heparin binding site; that stretch reads LRKR. A lipid-binding and lipoprotein association region spans residues 204–273; that stretch reads AALTGQPLRE…GWFEPMMEDM (70 aa). 219-226 lines the heparin pocket; it reads GERLRGRL. Residues 261–273 form a specificity for association with VLDL region; it reads RLKGWFEPMMEDM.

The protein belongs to the apolipoprotein A1/A4/E family. In terms of assembly, homotetramer. May interact with ABCA1; functionally associated with ABCA1 in the biogenesis of HDLs. May interact with APP/A4 amyloid-beta peptide; the interaction is extremely stable in vitro but its physiological significance is unclear. May interact with MAPT. May interact with MAP2. In the cerebrospinal fluid, interacts with secreted SORL1. Interacts with PMEL; this allows the loading of PMEL luminal fragment on ILVs to induce fibril nucleation. Post-translationally, APOE exists as multiple glycosylated and sialylated glycoforms within cells and in plasma. The extent of glycosylation and sialylation are tissue and context specific. Glycated in plasma VLDL. In terms of processing, phosphorylated by FAM20C in the extracellular medium.

The protein resides in the secreted. The protein localises to the extracellular space. Its subcellular location is the extracellular matrix. It is found in the extracellular vesicle. It localises to the endosome. The protein resides in the multivesicular body. In terms of biological role, APOE is an apolipoprotein, a protein associating with lipid particles, that mainly functions in lipoprotein-mediated lipid transport between organs via the plasma and interstitial fluids. APOE is a core component of plasma lipoproteins and is involved in their production, conversion and clearance. Apolipoproteins are amphipathic molecules that interact both with lipids of the lipoprotein particle core and the aqueous environment of the plasma. As such, APOE associates with chylomicrons, chylomicron remnants, very low density lipoproteins (VLDL) and intermediate density lipoproteins (IDL) but shows a preferential binding to high-density lipoproteins (HDL). It also binds a wide range of cellular receptors including the LDL receptor/LDLR and the very low-density lipoprotein receptor/VLDLR that mediate the cellular uptake of the APOE-containing lipoprotein particles. Finally, APOE also has a heparin-binding activity and binds heparan-sulfate proteoglycans on the surface of cells, a property that supports the capture and the receptor-mediated uptake of APOE-containing lipoproteins by cells. This is Apolipoprotein E (APOE) from Heterocephalus glaber (Naked mole rat).